The chain runs to 514 residues: Leucine-rich repeat-containing protein 14B (514 aa).

An LRR 1; degenerate repeat occupies Arg-104–Thr-141. Residues Arg-185–Gly-209 form an LRR 2; degenerate repeat. The LRR 4; degenerate repeat unit spans residues Phe-238–Lys-277. 5 LRR repeats span residues Met-278 to Leu-302, Gln-303 to Glu-334, Val-335 to Thr-350, Ser-359 to Pro-386, and Cys-387 to Ala-411.

Belongs to the PRAME family. LRRC14 subfamily.

In Homo sapiens (Human), this protein is Leucine-rich repeat-containing protein 14B.